The following is a 288-amino-acid chain: Probable syndecan (288 aa).

The first 26 residues, 1–26 (MILKLNFCLSTYSVLILLSLSTQAFA), serve as a signal peptide directing secretion. Residues 27–231 (ANQAKTKVVP…ETLANGFYAA (205 aa)) are Extracellular-facing. A disordered region spans residues 67–175 (EVNGSGYPTD…NIHNDEDFFT (109 aa)). N-linked (GlcNAc...) asparagine glycosylation occurs at Asn69. Residues Ser71 and Ser86 are each glycosylated (O-linked (Xyl...) (glycosaminoglycan) serine). The span at 89–104 (PPSSATTKSDKVTSPS) shows a compositional bias: polar residues. Over residues 106 to 124 (AVVTAKPTTVPTTTASFKP) the composition is skewed to low complexity. Acidic residues predominate over residues 141–164 (VEEDEDDDEDEDEDDEDDEEDFAD). A glycan (O-linked (Xyl...) (glycosaminoglycan) serine) is linked at Ser214. Residues 232–252 (IAGGVLVAVITAILLVLFVVF) form a helical membrane-spanning segment. Topologically, residues 253–288 (RIRKKDEGSYALDEPKQARPYASYGYTKASTKEFYA) are cytoplasmic.

This sequence belongs to the syndecan proteoglycan family.

Its subcellular location is the membrane. The protein resides in the cell surface. The protein localises to the cell junction. It localises to the cytoplasm. In terms of biological role, cell surface proteoglycan that bears heparan sulfate. Required for correct mitotic spindle orientation of the ABar blastomere division plane and this may be through modulation of astral microtubule array, and in association with the wnt-signaling proteins mig-5 and dsh-2. Involved in the migration of AQR and PQR neurons, which descend from the Q neuroblasts. Promotes the axon guidance of D-type motor neurons. The polypeptide is Probable syndecan (Caenorhabditis elegans).